Here is a 326-residue protein sequence, read N- to C-terminus: Probable cell division protein WhiA (326 aa).

Positions 275 to 308 form a DNA-binding region, H-T-H motif; the sequence is SLDELGHHADPPMTKDAVAGRIRRLLAMADKKAV.

This sequence belongs to the WhiA family.

Involved in cell division and chromosome segregation. This is Probable cell division protein WhiA from Clavibacter sepedonicus (Clavibacter michiganensis subsp. sepedonicus).